Here is an 88-residue protein sequence, read N- to C-terminus: EMBRYO SURROUNDING FACTOR 1-like protein 7 (88 aa).

A signal peptide spans 1–22 (MKSSHIALICIVMFSLFALHES). 4 disulfide bridges follow: Cys-41-Cys-57, Cys-46-Cys-85, Cys-55-Cys-81, and Cys-58-Cys-68.

The protein belongs to the MEG family. As to expression, expressed in leaves and flowers.

This is EMBRYO SURROUNDING FACTOR 1-like protein 7 (ESFL7) from Arabidopsis thaliana (Mouse-ear cress).